We begin with the raw amino-acid sequence, 554 residues long: (E)-nerolidol synthase TPS18VF (554 aa).

Arg276, Asp313, Asp317, Arg455, and Asp458 together coordinate (2E,6E)-farnesyl diphosphate. 2 residues coordinate Mg(2+): Asp313 and Asp317. A DDXXD motif motif is present at residues 313–317 (DDIFD). Positions 458, 462, and 466 each coordinate Mg(2+).

It belongs to the terpene synthase family. Tpsb subfamily. Requires Mg(2+) as cofactor. The cofactor is Mn(2+). Highly expressed in glandular trichomes.

It carries out the reaction (2E,6E)-farnesyl diphosphate + H2O = (6E)-nerolidol + diphosphate. The enzyme catalyses (2E)-geranyl diphosphate + H2O = (R)-linalool + diphosphate. It catalyses the reaction (2E)-geranyl diphosphate + H2O = (S)-linalool + diphosphate. Its pathway is secondary metabolite biosynthesis; terpenoid biosynthesis. Involved in sesquiterpene olefins biosynthesis, constituants of cannabinoids and terpenoids-rich resins. Catalyzes primarily the conversion of (2E)-farnesyl diphosphate to (E)-nerolidol, and the conversion of (2E)-geranyl diphosphate to (+)linalool and (-)linalool. The protein is (E)-nerolidol synthase TPS18VF of Cannabis sativa (Hemp).